A 198-amino-acid chain; its full sequence is Segregation and condensation protein B (198 aa).

This sequence belongs to the ScpB family. Homodimer. Homodimerization may be required to stabilize the binding of ScpA to the Smc head domains. Component of a cohesin-like complex composed of ScpA, ScpB and the Smc homodimer, in which ScpA and ScpB bind to the head domain of Smc. The presence of the three proteins is required for the association of the complex with DNA.

The protein localises to the cytoplasm. Participates in chromosomal partition during cell division. May act via the formation of a condensin-like complex containing Smc and ScpA that pull DNA away from mid-cell into both cell halves. In Acetivibrio thermocellus (strain ATCC 27405 / DSM 1237 / JCM 9322 / NBRC 103400 / NCIMB 10682 / NRRL B-4536 / VPI 7372) (Clostridium thermocellum), this protein is Segregation and condensation protein B.